The following is a 181-amino-acid chain: Probable RNA 2'-phosphotransferase (181 aa).

The protein belongs to the KptA/TPT1 family.

Its function is as follows. Removes the 2'-phosphate from RNA via an intermediate in which the phosphate is ADP-ribosylated by NAD followed by a presumed transesterification to release the RNA and generate ADP-ribose 1''-2''-cyclic phosphate (APPR&gt;P). May function as an ADP-ribosylase. In Acaryochloris marina (strain MBIC 11017), this protein is Probable RNA 2'-phosphotransferase.